A 209-amino-acid polypeptide reads, in one-letter code: A-type ATP synthase subunit D (209 aa).

Belongs to the V-ATPase D subunit family. In terms of assembly, has multiple subunits with at least A(3), B(3), C, D, E, F, H, I and proteolipid K(x).

The protein localises to the cell membrane. Its function is as follows. Component of the A-type ATP synthase that produces ATP from ADP in the presence of a proton gradient across the membrane. The protein is A-type ATP synthase subunit D of Methanoregula boonei (strain DSM 21154 / JCM 14090 / 6A8).